A 68-amino-acid polypeptide reads, in one-letter code: Protein SlyX homolog (68 aa).

Belongs to the SlyX family.

The chain is Protein SlyX homolog from Pseudomonas syringae pv. tomato (strain ATCC BAA-871 / DC3000).